Here is a 311-residue protein sequence, read N- to C-terminus: tRNA-cytidine(32) 2-sulfurtransferase (311 aa).

The short motif at 47-52 (SGGKDS) is the PP-loop motif element. The [4Fe-4S] cluster site is built by cysteine 122, cysteine 125, and cysteine 213.

It belongs to the TtcA family. As to quaternary structure, homodimer. The cofactor is Mg(2+). [4Fe-4S] cluster serves as cofactor.

The protein resides in the cytoplasm. The catalysed reaction is cytidine(32) in tRNA + S-sulfanyl-L-cysteinyl-[cysteine desulfurase] + AH2 + ATP = 2-thiocytidine(32) in tRNA + L-cysteinyl-[cysteine desulfurase] + A + AMP + diphosphate + H(+). Its pathway is tRNA modification. Functionally, catalyzes the ATP-dependent 2-thiolation of cytidine in position 32 of tRNA, to form 2-thiocytidine (s(2)C32). The sulfur atoms are provided by the cysteine/cysteine desulfurase (IscS) system. This Escherichia coli (strain K12 / MC4100 / BW2952) protein is tRNA-cytidine(32) 2-sulfurtransferase.